The following is a 583-amino-acid chain: Protein translocase subunit SecD (583 aa).

The next 6 membrane-spanning stretches (helical) occupy residues 7–27 (FGVVLVVLAACSGFLFPTLQW), 419–439 (LVWGLCAVLLFMLVWYQEAGV), 446–468 (LLNLYIMFGVLSAFNLTLTLSSI), 469–489 (AGMILTIGMAVDANVVVFERI), 511–531 (FWAIMDSNVTTFIAALFLSVL), and 538–558 (GFAYSLAIGVVSSVFTALFVS).

Belongs to the SecD/SecF family. SecD subfamily. Forms a complex with SecF. Part of the essential Sec protein translocation apparatus which comprises SecA, SecYEG and auxiliary proteins SecDF. Other proteins may also be involved.

It is found in the cell inner membrane. In terms of biological role, part of the Sec protein translocase complex. Interacts with the SecYEG preprotein conducting channel. SecDF uses the proton motive force (PMF) to complete protein translocation after the ATP-dependent function of SecA. This is Protein translocase subunit SecD from Treponema pallidum (strain Nichols).